The following is a 185-amino-acid chain: Ribosome-recycling factor (185 aa).

Belongs to the RRF family.

The protein localises to the cytoplasm. In terms of biological role, responsible for the release of ribosomes from messenger RNA at the termination of protein biosynthesis. May increase the efficiency of translation by recycling ribosomes from one round of translation to another. The sequence is that of Ribosome-recycling factor from Shewanella denitrificans (strain OS217 / ATCC BAA-1090 / DSM 15013).